A 506-amino-acid chain; its full sequence is Glutamyl-tRNA(Gln) amidotransferase subunit A, mitochondrial (506 aa).

Residues lysine 62 and serine 141 each act as charge relay system in the active site. Catalysis depends on serine 165, which acts as the Acyl-ester intermediate.

It belongs to the amidase family. GatA subfamily. Subunit of the heterotrimeric GatCAB amidotransferase (AdT) complex, composed of A, B and C subunits.

It localises to the mitochondrion. It carries out the reaction L-glutamyl-tRNA(Gln) + L-glutamine + ATP + H2O = L-glutaminyl-tRNA(Gln) + L-glutamate + ADP + phosphate + H(+). Allows the formation of correctly charged Gln-tRNA(Gln) through the transamidation of misacylated Glu-tRNA(Gln) in the mitochondria. The reaction takes place in the presence of glutamine and ATP through an activated gamma-phospho-Glu-tRNA(Gln). This is Glutamyl-tRNA(Gln) amidotransferase subunit A, mitochondrial from Emericella nidulans (strain FGSC A4 / ATCC 38163 / CBS 112.46 / NRRL 194 / M139) (Aspergillus nidulans).